The following is an 87-amino-acid chain: Large ribosomal subunit protein bL31B (87 aa).

It belongs to the bacterial ribosomal protein bL31 family. Type B subfamily. In terms of assembly, part of the 50S ribosomal subunit.

The protein is Large ribosomal subunit protein bL31B of Pseudomonas paraeruginosa (strain DSM 24068 / PA7) (Pseudomonas aeruginosa (strain PA7)).